Here is a 339-residue protein sequence, read N- to C-terminus: Glucokinase (339 aa).

Residue 16–21 (GDIGGT) coordinates ATP.

Belongs to the bacterial glucokinase family.

The protein localises to the cytoplasm. It carries out the reaction D-glucose + ATP = D-glucose 6-phosphate + ADP + H(+). The chain is Glucokinase from Sinorhizobium medicae (strain WSM419) (Ensifer medicae).